The sequence spans 303 residues: NAC domain-containing protein 48 (303 aa).

The 151-residue stretch at 9–159 (LPPGFRFHPT…DWVLCRIYNK (151 aa)) folds into the NAC domain.

In terms of assembly, interacts with NAC071. As to expression, widely expressed.

The protein resides in the nucleus. Transcription activator that binds to the promoter of the stress response gene LEA19. Involved in tolerance to abiotic stresses. Transcription activator involved in response to abiotic and biotic stresses. Involved in drought and salt stress responses, and defense response to the rice blast fungus. Transcription activator involved tolerance to cold and salt stresses. Transcription activator involved in tolerance to drought stress. Targets directly and activates genes involved in membrane modification, nicotianamine (NA) biosynthesis, glutathione relocation, accumulation of phosphoadenosine phosphosulfate and glycosylation in roots. Controls root growth at early vegetative stage through chromatin modification and histone lysine deacytaltion by HDAC1. The protein is NAC domain-containing protein 48 of Oryza sativa subsp. japonica (Rice).